Here is a 658-residue protein sequence, read N- to C-terminus: Outer dynein arm-docking complex subunit 1 (658 aa).

Coiled-coil stretches lie at residues 11 to 156 (KEVH…RYLN), 186 to 234 (REEA…KNDE), and 303 to 380 (NFIN…TDIQ). Disordered stretches follow at residues 496-552 (DEEE…SVSH) and 574-658 (GAPV…RGYN). 4 positions are modified to phosphoserine: Ser-500, Ser-506, Ser-507, and Ser-509. 4 stretches are compositionally biased toward low complexity: residues 506 to 519 (SSPS…QISL), 574 to 583 (GAPVSSRSSQ), 592 to 604 (TSSS…TGYL), and 621 to 639 (SMGS…HASS).

It belongs to the ODA1/DCC2 family. As to quaternary structure, component of the outer dynein arm-docking complex along with ODAD2, ODAD3, ODAD4 and CLXN. Interacts with ODAD3. Interacts with ODAD4; this interaction may facilitate the recruitment and/or attachment of outer dynein arm docking complex proteins including ODAD1, ODAD3, and ODAD4 to ciliary axonemes. Interacts with DNAH9. Interacts with MNS1. Interacts with PIERCE1 and PIERCE2; the interactions link the outer dynein arms docking complex (ODA-DC) to the internal microtubule inner proteins (MIP) in cilium axoneme. Expressed in motile ciliated tissues.

Its subcellular location is the cytoplasm. The protein resides in the cytoskeleton. It localises to the cilium axoneme. Functionally, component of the outer dynein arm-docking complex that mediates outer dynein arms (ODA) binding onto the doublet microtubule. Involved in mediating assembly of both ODAs and their axonemal docking complex onto ciliary microtubules. The chain is Outer dynein arm-docking complex subunit 1 (Odad1) from Mus musculus (Mouse).